A 386-amino-acid polypeptide reads, in one-letter code: Probable magnesium transporter NIPA5 (386 aa).

Residues methionine 1 to aspartate 18 lie on the Extracellular side of the membrane. The helical transmembrane segment at asparagine 19–valine 39 threads the bilayer. Residues lysine 40–tyrosine 61 lie on the Cytoplasmic side of the membrane. The next 2 membrane-spanning stretches (helical) occupy residues leucine 62–phenylalanine 82 and alanine 83–isoleucine 103. Residues serine 104–lysine 115 are Cytoplasmic-facing. The helical transmembrane segment at leucine 116 to leucine 136 threads the bilayer. Residues histidine 137 to proline 157 are Extracellular-facing. The helical transmembrane segment at alanine 158–isoleucine 178 threads the bilayer. Residues proline 179–tyrosine 189 are Cytoplasmic-facing. Residues isoleucine 190–alanine 210 form a helical membrane-spanning segment. Topologically, residues leucine 211 to glutamine 220 are extracellular. The helical transmembrane segment at leucine 221–methionine 241 threads the bilayer. The Cytoplasmic segment spans residues asparagine 242 to valine 255. A helical membrane pass occupies residues valine 256 to phenylalanine 276. The Extracellular portion of the chain corresponds to lysine 277–serine 283. A helical transmembrane segment spans residues glycine 284–leucine 304. Residues histidine 305 to serine 386 lie on the Cytoplasmic side of the membrane. The segment at arginine 352–serine 386 is disordered. Residues proline 376 to serine 386 are compositionally biased toward basic and acidic residues.

The protein belongs to the NIPA (TC 2.A.7) family. Homodimer.

The protein localises to the cell membrane. The protein resides in the early endosome. Acts as a Mg(2+) transporter. Can also transport other divalent cations such as Fe(2+), Sr(2+), Ba(2+), Mn(2+) and Co(2+) but to a much less extent than Mg(2+). In Arabidopsis thaliana (Mouse-ear cress), this protein is Probable magnesium transporter NIPA5.